Reading from the N-terminus, the 339-residue chain is uncharacterized protein (339 aa).

The segment covering 1–12 has biased composition (polar residues); it reads MDIDLNNQTDNN. The tract at residues 1–30 is disordered; it reads MDIDLNNQTDNNELIVEDTENPKNPNSTNI.

This is an uncharacterized protein from Acanthamoeba polyphaga (Amoeba).